The primary structure comprises 711 residues: DNA ligase (711 aa).

NAD(+) is bound by residues 39–43, 88–89, and Glu119; these read DAEYD and SL. Lys121 functions as the N6-AMP-lysine intermediate in the catalytic mechanism. NAD(+) contacts are provided by Arg142, Glu179, Lys295, and Lys319. Residues Cys416, Cys419, Cys434, and Cys440 each contribute to the Zn(2+) site. A BRCT domain is found at 630–711; that stretch reads ESVSSLAGRA…LRELLAGAGA (82 aa).

The protein belongs to the NAD-dependent DNA ligase family. LigA subfamily. Mg(2+) is required as a cofactor. The cofactor is Mn(2+).

The catalysed reaction is NAD(+) + (deoxyribonucleotide)n-3'-hydroxyl + 5'-phospho-(deoxyribonucleotide)m = (deoxyribonucleotide)n+m + AMP + beta-nicotinamide D-nucleotide.. In terms of biological role, DNA ligase that catalyzes the formation of phosphodiester linkages between 5'-phosphoryl and 3'-hydroxyl groups in double-stranded DNA using NAD as a coenzyme and as the energy source for the reaction. It is essential for DNA replication and repair of damaged DNA. This Halorhodospira halophila (strain DSM 244 / SL1) (Ectothiorhodospira halophila (strain DSM 244 / SL1)) protein is DNA ligase.